A 146-amino-acid chain; its full sequence is Angiogenin (146 aa).

Positions 1 to 24 are cleaved as a signal peptide; the sequence is MVMGLGLFLLVFMLGLGLTPPTLA. At glutamine 25 the chain carries Pyrrolidone carboxylic acid. Residue histidine 37 is the Proton acceptor of the active site. Arginine 45 contacts tRNA. 3 disulfide bridges follow: cysteine 50–cysteine 105, cysteine 63–cysteine 116, and cysteine 81–cysteine 131. A Nucleolar localization signal motif is present at residues 55 to 59; that stretch reads RRRGL. Residues cysteine 105 and isoleucine 127 each contribute to the tRNA site. Catalysis depends on histidine 138, which acts as the Proton donor.

The protein belongs to the pancreatic ribonuclease family. Homodimer. Interacts with RNH1; inhibiting ANG ribonuclease activity. Interacts with PCNA.

It is found in the secreted. It localises to the nucleus. Its subcellular location is the nucleolus. The protein localises to the cytoplasm. The protein resides in the stress granule. Has weak tRNA ribonuclease activity by itself due to partial autoinhibition by its C-terminus, which folds into a short alpha-helix that partially occludes the substrate-binding site. In absence of stress, the ribonuclease activity is inhibited by RNH1 in the cytoplasm. In response to stress, dissociates from RNH1 in the cytoplasm and associates with cytoplasmic ribosomes with vacant A-sites: ribosomes directly activate the tRNA ribonuclease activity of ANG by refolding the C-terminal alpha-helix. In response to stress, the angiogenic activity of ANG is inhibited by RNH1 in the nucleus. Functionally, secreted ribonuclease that can either promote or restrict cell proliferation of target cells, depending on the context. Endocytosed in target cells via its receptor PLXNB2 and translocates to the cytoplasm or nucleus. Under stress conditions, localizes to the cytoplasm and promotes the assembly of stress granules (SGs): specifically cleaves a subset of tRNAs within anticodon loops to produce tRNA-derived stress-induced fragments (tiRNAs), resulting in translation repression and inhibition of cell proliferation. tiRNas also prevent formation of apoptosome, thereby promoting cell survival. Preferentially cleaves RNAs between a pyrimidine and an adenosine residue, suggesting that it cleaves the anticodon loop of tRNA(Ala) (32-UUAGCAU-38) after positions 33 and 36. Cleaves a subset of tRNAs, including tRNA(Ala), tRNA(Glu), tRNA(Gly), tRNA(Lys), tRNA(Val), tRNA(His), tRNA(Asp) and tRNA(Sec). Under growth conditions and in differentiated cells, translocates to the nucleus and stimulates ribosomal RNA (rRNA) transcription, including that containing the initiation site sequences of 45S rRNA, thereby promoting cell growth and proliferation. Angiogenin induces vascularization of normal and malignant tissues via its ability to promote rRNA transcription. Involved in hematopoietic stem and progenitor cell (HSPC) growth and survival by promoting rRNA transcription in growth conditions and inhibiting translation in response to stress, respectively. Mediates the crosstalk between myeloid and intestinal epithelial cells to protect the intestinal epithelial barrier integrity: secreted by myeloid cells and promotes intestinal epithelial cells proliferation and survival. Also mediates osteoclast-endothelial cell crosstalk in growing bone: produced by osteoclasts and protects the neighboring vascular cells against senescence by promoting rRNA transcription. This Rhinopithecus avunculus (Tonkin snub-nosed monkey) protein is Angiogenin (ANG).